The primary structure comprises 793 residues: RNA-binding protein spenito (793 aa).

2 disordered regions span residues 1 to 93 (MSSH…PPAE) and 243 to 296 (HHDY…KKDK). The span at 25 to 42 (SRSPGPASRSSLSRNSRS) shows a compositional bias: low complexity. A compositionally biased stretch (basic residues) spans 257–268 (RGGHPHHLHGHA). Over residues 285–296 (APYEKPESKKDK) the composition is skewed to basic and acidic residues. 2 RRM domains span residues 314-391 (RTLF…YGKV) and 395-469 (TRMW…FAEL). The disordered stretch occupies residues 507–623 (YAPRGGYSPY…RNDALASAST (117 aa)). The segment covering 526 to 536 (GGYRGRGRGMY) has biased composition (basic residues). Basic and acidic residues predominate over residues 566-593 (DEWRRPPGESYDRGARSSSREPGVERSR). The SPOC domain maps to 624–791 (VPDVARKCST…HLVIVVVRGG (168 aa)).

This sequence belongs to the RRM Spen family. In terms of assembly, component of the WMM complex, a N6-methyltransferase complex composed of a catalytic subcomplex, named MAC, and of an associated subcomplex, named MACOM. The MAC subcomplex is composed of Ime4/Mettl3 and Mettl14. The MACOM subcomplex is composed of fl(2)d, Flacc/Xio, Hakai, vir, and, in some cases of nito. Interacts with Sxl. Interacts with Hipk; leading to phosphorylation. In terms of processing, phosphorylated by Hipk at Ser-23, Ser-25 and/or Ser-27; the precise position if phosphorylation sites is unknown. In terms of tissue distribution, widely expressed. Shows some enrichment in the central nervous system.

It is found in the nucleus. In terms of biological role, RNA-binding protein that acts as an associated component of the WMM complex, a complex that mediates N6-methyladenosine (m6A) methylation of mRNAs. M6a modification plays a role in the efficiency of mRNA splicing and is required for sex determination. In the WMM complex, may act by binding target RNAs and recruiting the WMM complex. Required for sex determination and dosage compensation via Sxl alternative splicing: m6A methylation acts as a key regulator of Sxl pre-mRNA and promotes female-specific alternative splicing of Sxl, which determines female physiognomy. M6A methylation is also required for neuronal functions. Acts as a positive regulator of canonical Wg signaling during wing disk and eye development. This is RNA-binding protein spenito from Drosophila melanogaster (Fruit fly).